Consider the following 676-residue polypeptide: Vitamin K-dependent protein S (676 aa).

Positions 1–24 (MRVLGGRCGALLACLLLVLPVSEA) are cleaved as a signal peptide. The propeptide occupies 25–41 (NFLSKQQASQVLVRKRR). A Gla domain is found at 42–87 (ANSLLEETKQGNLERECIEELCNKEEAREVFENDPETDYFYPKYLV). Glu-47, Glu-48, Glu-55, Glu-57, Glu-60, Glu-61, Glu-66, Glu-67, Glu-70, Glu-73, and Glu-77 each carry 4-carboxyglutamate. A disulfide bond links Cys-58 and Cys-63. The segment at 88–116 (CLRSFQTGLFTAARQSTNAYPDLRSCVNA) is thrombin-sensitive. The region spanning 117 to 155 (IPDQCSPLPCNEDGYMSCKDGKASFTCTCKPGWQGEKCE) is the EGF-like 1 domain. Cystine bridges form between Cys-121-Cys-134, Cys-126-Cys-143, Cys-145-Cys-154, Cys-161-Cys-175, Cys-171-Cys-184, Cys-186-Cys-199, Cys-205-Cys-217, Cys-212-Cys-226, Cys-228-Cys-241, Cys-247-Cys-256, Cys-252-Cys-265, Cys-267-Cys-282, and Cys-449-Cys-475. Residue Asp-136 is modified to (3R)-3-hydroxyaspartate. Residues 157-200 (DINECKDPSNINGGCSQICDNTPGSYHCSCKNGFVMLSNKKDCK) form the EGF-like 2; calcium-binding domain. One can recognise an EGF-like 3; calcium-binding domain in the interval 201–242 (DVDECSLKPSICGTAVCKNIPGDFECECPEGYRYNLKSKSCE). In terms of domain architecture, EGF-like 4; calcium-binding spans 243-283 (DIDECSENMCAQLCVNYPGGYTCYCDGKKGFKLAQDQKSCE). 2 Laminin G-like domains span residues 299–475 (LLYL…NKHC) and 484–666 (YYPG…AHSC). Residues Asn-499, Asn-509, and Asn-530 are each glycosylated (N-linked (GlcNAc...) asparagine). Cysteines 639 and 666 form a disulfide.

The iron and 2-oxoglutarate dependent 3-hydroxylation of aspartate and asparagine is (R) stereospecific within EGF domains. In terms of tissue distribution, plasma.

It is found in the secreted. In terms of biological role, anticoagulant plasma protein; it is a cofactor to activated protein C in the degradation of coagulation factors Va and VIIIa. It helps to prevent coagulation and stimulating fibrinolysis. The protein is Vitamin K-dependent protein S (PROS1) of Homo sapiens (Human).